We begin with the raw amino-acid sequence, 233 residues long: Homeobox protein not2 (233 aa).

Residues 135–194 (LKRIRTVFTPEQLERLEKEFLKQQYMVGTERVDLASTLNLTETQVKVWFQNRRIKWRKQS) constitute a DNA-binding region (homeobox). The interval 212–233 (SSDHTDDSRETEEEEDDVDVEL) is disordered. Positions 220-233 (RETEEEEDDVDVEL) are enriched in acidic residues.

As to expression, localized to the dorsal lip of the blastopore (Spemann organizer) during early gastrulation, after which expression continues in tissues derived from the organizer. Expressed in the notochord during mid-gastrulation, the chordoneural hinge, notochord and ventral spinal cord of the tailbud at stage 22, and finally the tip of the tail in the tadpole (stage 35).

The protein resides in the nucleus. Its function is as follows. Transcriptional repressor. Plays a fundamental role in notochord formation, acting within the mesodermal region. Acts downstream of gsc and upstream of chrd and foxa4-A/pintallavis. The polypeptide is Homeobox protein not2 (Xenopus laevis (African clawed frog)).